Here is a 2437-residue protein sequence, read N- to C-terminus: Neurogenic locus notch homolog protein 1 (2437 aa).

A signal peptide spans 1–20 (MNRFLVKLTLLTAASLATVA). 4 EGF-like domains span residues 21-57 (QGQR…AQCQ), 58-98 (FPNP…RLCL), 101-138 (VNHA…KTCQ), and 139-175 (LADP…QTCR). The Extracellular segment spans residues 21 to 1726 (QGQRCSEYCQ…GGPPKTGEMY (1706 aa)). Intrachain disulfides connect C25-C35, C29-C45, C47-C56, C62-C73, C67-C86, C88-C97, C105-C116, C110-C126, C128-C137, C143-C154, C148-C163, C165-C174, C181-C194, C188-C203, C205-C214, C221-C232, C226-C242, C244-C253, C260-C271, C265-C280, C282-C291, C298-C311, C305-C320, C322-C331, C338-C349, C343-C358, C360-C369, C375-C386, C380-C397, C399-C408, C415-C428, C422-C437, C439-C448, C455-C466, C460-C475, C477-C486, C493-C503, C498-C512, C514-C523, C530-C541, C535-C550, C552-C561, C568-C578, C573-C587, C589-C598, C605-C616, C610-C625, C627-C636, C643-C653, C648-C662, C664-C673, C680-C691, C685-C700, C702-C711, C718-C728, C723-C737, C739-C748, C755-C766, C760-C775, C777-C786, C793-C804, C798-C813, C815-C824, C831-C842, C836-C853, C855-C864, C871-C882, C876-C891, C893-C902, C909-C920, C914-C929, C931-C940, C947-C958, C952-C967, C969-C978, C985-C996, C990-C1005, C1007-C1016, C1023-C1034, C1028-C1043, C1045-C1054, C1061-C1072, C1066-C1081, C1083-C1092, C1099-C1120, C1114-C1129, C1131-C1140, C1147-C1158, C1152-C1167, C1169-C1178, C1185-C1196, C1190-C1205, C1207-C1216, C1223-C1242, C1236-C1251, C1253-C1262, C1269-C1282, C1274-C1291, C1293-C1302, C1309-C1320, C1314-C1332, C1334-C1343, C1350-C1361, C1355-C1370, C1372-C1381, C1389-C1400, C1394-C1411, C1413-C1422, C1447-C1470, C1452-C1465, and C1461-C1477. Residues 177–215 (DVNECAVSPSPCRNGGTCINEVGSYLCRCPPEYTGPHCQ) enclose the EGF-like 5; calcium-binding domain. One can recognise an EGF-like 6 domain in the interval 217-254 (LYQPCLPSPCRSGGTCVQTSDTTHTCSCLPGFTGQTCE). Residue T231 is glycosylated (O-linked (Fuc...) threonine; alternate). O-linked (GalNAc...) threonine; alternate glycosylation is present at T231. Positions 256–292 (NVDDCTQHACENGGPCIDGINTYNCHCDKHWTGQYCT) constitute an EGF-like 7; calcium-binding domain. One can recognise an EGF-like 8; calcium-binding domain in the interval 294-332 (DVDECELSPNACQNGGTCHNTIGGFHCVCVNGWTGDDCS). In terms of domain architecture, EGF-like 9; calcium-binding spans 334-370 (NIDDCASAACSHGATCHDRVASFFCECPHGRTGLLCH). The 39-residue stretch at 371–409 (LDDACISNPCQKGSNCDTNPVSGKAICTCPPGYTGSACN) folds into the EGF-like 10 domain. The region spanning 411–449 (DIDECSLGANPCEHGGRCLNTKGSFQCKCLQGYEGPRCE) is the EGF-like 11; calcium-binding domain. Residues 451–487 (DVNECKSNPCQNDATCLDQIGGFHCICMPGYEGVFCQ) form the EGF-like 12; calcium-binding domain. The EGF-like 13; calcium-binding domain maps to 489 to 524 (NSDDCASQPCLNGKCIDKINSFHCECPKGFSGSLCQ). The region spanning 526 to 562 (DVDECASTPCKNGAKCTDGPNKYTCECTPGFSGIHCE) is the EGF-like 14; calcium-binding domain. The EGF-like 15; calcium-binding domain maps to 564-599 (DINECASSPCHYGVCRDGVASFTCDCRPGYTGRLCE). The EGF-like 16; calcium-binding domain occupies 601-637 (NINECLSQPCRNGGTCQDRENAYICTCPKGTTGVNCE). An EGF-like 17; calcium-binding domain is found at 639 to 674 (NIDDCKRKPCDYGKCIDKINGYECVCEPGYSGSMCN). In terms of domain architecture, EGF-like 18; calcium-binding spans 676-712 (NIDDCALNPCHNGGTCIDGVNSFTCLCPDGFRDATCL). One can recognise an EGF-like 19; calcium-binding domain in the interval 714-749 (QHNECSSNPCIHGSCLDQINSYRCVCEAGWMGRNCD). Positions 751-787 (NINECLSNPCVNGGTCKDMTSGYLCTCRAGFSGPNCQ) constitute an EGF-like 20; calcium-binding domain. The region spanning 789–825 (NINECASNPCLNQGSCIDDVAGFKCNCMLPYTGEVCE) is the EGF-like 21; calcium-binding domain. The region spanning 827-865 (VLAPCSPRPCKNGGVCRESEDFQSFSCNCPAGWQGQTCE) is the EGF-like 22 domain. In terms of domain architecture, EGF-like 23; calcium-binding spans 867–903 (DINECVRNPCTNGGVCENLRGGFQCRCNPGFTGALCE). The 37-residue stretch at 905 to 941 (DIDDCEPNPCSNGGVCQDRVNGFVCVCLAGFRGERCA) folds into the EGF-like 24; calcium-binding domain. Residues 943 to 979 (DIDECVSAPCRNGGNCTDCVNSYTCSCPAGFSGINCE) enclose the EGF-like 25; calcium-binding domain. N957 is a glycosylation site (N-linked (GlcNAc...) asparagine). Residues 981 to 1017 (NTPDCTESSCFNGGTCVDGISSFSCVCLPGFTGNYCQ) form the EGF-like 26 domain. Residues 1019 to 1055 (DVNECDSRPCQNGGSCQDGYGTYKCTCPHGYTGLNCQ) form the EGF-like 27; calcium-binding domain. 2 consecutive EGF-like domains span residues 1057-1093 (LVRW…IYCD) and 1095-1141 (PSVS…SYCQ). Positions 1143–1179 (QVDECQPNPCQNGATCTDYLGGYSCECVPGYHGMNCS) constitute an EGF-like 30; calcium-binding domain. An N-linked (GlcNAc...) asparagine glycan is attached at N1177. Residues 1181–1217 (EINECLSQPCQNGGTCIDLVNTYKCSCPRGTQGVHCE) enclose the EGF-like 31; calcium-binding domain. An EGF-like 32; calcium-binding domain is found at 1219 to 1263 (DIDDCSPSVDPLTGEPRCFNGGRCVDRVGGYGCVCPAGFVGERCE). 4 EGF-like domains span residues 1265-1303 (DVNE…KRCE), 1305-1344 (VFNG…SSCE), 1346-1382 (DSQS…HECQ), and 1385-1423 (MDSP…LLCH). T1399 carries an O-linked (Fuc...) threonine; alternate glycan. A glycan (O-linked (GalNAc...) threonine; alternate) is linked at T1399. LNR repeat units follow at residues 1447–1487 (CEIA…PWQN), 1488–1525 (CSAA…LEGQ), and 1526–1566 (CNPL…VPQK). An N-linked (GlcNAc...) asparagine glycan is attached at N1487. Cystine bridges form between C1488/C1512, C1494/C1507, C1503/C1519, C1526/C1552, C1534/C1547, and C1543/C1559. Residue N1585 is glycosylated (N-linked (GlcNAc...) asparagine). Residues 1727–1747 (PMFLVLLALAVLALAAVGVVV) form a helical membrane-spanning segment. At 1748-2437 (SRKRKREHGQ…QMNHIPEAFK (690 aa)) the chain is on the cytoplasmic side. Positions 1770-1790 (KKKRREPVGEDSVGLKPLKNS) are disordered. ANK repeat units lie at residues 1867 to 1910 (DGFT…NLHN), 1915 to 1944 (TGET…DANV), 1948 to 1978 (MGRT…DLDA), 1982 to 2011 (DGTT…DPNA), 2015 to 2044 (SGKS…NKDL), and 2048 to 2077 (KEET…NRDI). Disordered regions lie at residues 2127–2174 (IKPS…GGIM) and 2356–2437 (RMAP…EAFK). Residues 2356–2387 (RMAPPISSTQFLTPPSQHSYSNPMDNTPNHQQ) are compositionally biased toward polar residues. Residues 2396–2411 (PSAGSPDQWSSSSPHS) show a composition bias toward low complexity. Residues 2412–2429 (NLSDWSEGISSPPTSMQM) are compositionally biased toward polar residues.

This sequence belongs to the NOTCH family. In terms of processing, synthesized in the endoplasmic reticulum as an inactive form which is proteolytically cleaved by a furin-like convertase in the trans-Golgi network before it reaches the plasma membrane to yield an active, ligand-accessible form. Cleavage results in a C-terminal fragment N(TM) and a N-terminal fragment N(EC). Following ligand binding, it is cleaved by adam17 to yield a membrane-associated intermediate fragment called notch extracellular truncation (NEXT). Following endocytosis, this fragment is then cleaved by presenilin dependent gamma-secretase to release a Notch-derived peptide containing the intracellular domain (NICD) from the membrane. Post-translationally, O-glycosylated on the EGF-like domains. Contains both O-linked fucose and O-linked glucose. O-linked glycosylation by galnt11 is involved in determination of left/right symmetry: glycosylation promotes activation of notch1, possibly by promoting cleavage by adam17, modulating the balance between motile and immotile (sensory) cilia at the left-right organiser (LRO).

It is found in the cell membrane. It localises to the nucleus. Its function is as follows. Functions as a receptor for membrane-bound ligands Jagged-1 (JAG1), Jagged-2 (JAG2) and Delta-1 (DLL1) to regulate cell-fate determination. Upon ligand activation through the released notch intracellular domain (NICD) it forms a transcriptional activator complex with RBPJ/RBPSUH and activates genes of the enhancer of split locus. Affects the implementation of differentiation, proliferation and apoptotic programs. Involved in angiogenesis; negatively regulates endothelial cell proliferation and migration and angiogenic sprouting. Involved in the maturation of both CD4(+) and CD8(+) cells in the thymus. Important for follicular differentiation and possibly cell fate selection within the follicle. During cerebellar development, functions as a receptor for neuronal DNER and is involved in the differentiation of Bergmann glia. Represses neuronal and myogenic differentiation. May play an essential role in postimplantation development, probably in some aspect of cell specification and/or differentiation. May be involved in mesoderm development, somite formation and neurogenesis. Involved in determination of left/right symmetry by modulating the balance between motile and immotile (sensory) cilia at the left-right organiser (LRO). This Danio rerio (Zebrafish) protein is Neurogenic locus notch homolog protein 1 (notch1a).